The primary structure comprises 644 residues: MKTTIKNSRTQESVSYEGNETKKGTGETLSYETSKDIEVPERLIDQIIGQEEAVETIKKAAEQRRNVLLIGEPGVGKSMLAKAMAELLPREQLQDILVYPNIEDPNNPLIGAVPAGEGRKIVMNHKNKARSQDEKKNLFMMLIISFILVLGFMMNQFLAAIIAAGIIFLALQQFRPRTTVMVPKLLVNNEGRQVAPFVDATGAHAGALLGDVRHDPYQSGGLGTPAHERVEAGMIHKANKGVLYIDEIGTMKMKTQQELLTAMQEKRYSITGQSETSSGAMVRSQAVPCDFVLVASGNLQVLEGMHPALRSRIRGYGYEVFMKDTMPDTPENRDKLVQFVAQEVEKDGRIPHFSREAVEEIIREAQRRAGKKDSLTLKLRELGGLVRAAGDIAKSRGAELVETEDVIEAKKLSRTLEQQIADRYIVQKKKYSVFKSEGGEVGRVNGLAIIGDRSGIILPIAAEAAPAQSKEEGRIIATGKLGEIAREAVQNVSALIKKYTGTDISNYDIHIQFLQAYDGVEGDSASVSVATAVISALEEIPVDQSVALTGSLSIRGDVLPVGGVTGKIEAAAEAGIRKVLIPASNMGDVMIEKKYEDMVEIVPVETLGDVLEHALIGKGKESLIQRMQKISDIVPSIMKKPAMH.

Residues 1–18 (MKTTIKNSRTQESVSYEG) are compositionally biased toward polar residues. Positions 1 to 30 (MKTTIKNSRTQESVSYEGNETKKGTGETLS) are disordered. Residues 1 to 137 (MKTTIKNSRT…KARSQDEKKN (137 aa)) are Cytoplasmic-facing. Residue 71 to 78 (GEPGVGKS) participates in ATP binding. 2 consecutive transmembrane segments (helical) span residues 138-155 (LFMM…FMMN) and 156-171 (QFLA…FLAL). Residues 172-644 (QQFRPRTTVM…PSIMKKPAMH (473 aa)) lie on the Cytoplasmic side of the membrane. Residues 438-617 (GGEVGRVNGL…GDVLEHALIG (180 aa)) form the Lon proteolytic domain. Residues Ser-524 and Lys-567 contribute to the active site.

It belongs to the peptidase S16 family. Archaeal LonB subfamily. As to quaternary structure, homohexamer. Organized in a ring with a central cavity.

It is found in the cell membrane. Functionally, ATP-dependent serine protease that mediates the selective degradation of mutant and abnormal proteins as well as certain short-lived regulatory proteins. Degrades polypeptides processively. This chain is Archaeal Lon protease, found in Methanothermobacter thermautotrophicus (strain ATCC 29096 / DSM 1053 / JCM 10044 / NBRC 100330 / Delta H) (Methanobacterium thermoautotrophicum).